The chain runs to 478 residues: Cytochrome c-552 (478 aa).

Residues 1-26 (MTRIKINARRIFSLLIPFFFFTSVHA) form the signal peptide. His-94 lines the heme c pocket. Heme-binding residues include Cys-122, Cys-125, and Lys-126. Heme c is bound by residues Cys-160, Cys-163, His-164, Cys-209, Cys-212, and His-213. Ca(2+) is bound by residues Glu-215, Tyr-216, Lys-261, and Gln-263. A substrate-binding site is contributed by Tyr-216. His-264 provides a ligand contact to substrate. Heme c-binding residues include His-275, Cys-282, Cys-285, His-286, His-301, Cys-314, Cys-317, His-318, and His-393.

The protein belongs to the cytochrome c-552 family. Requires Ca(2+) as cofactor. The cofactor is heme c.

It is found in the periplasm. The catalysed reaction is 6 Fe(III)-[cytochrome c] + NH4(+) + 2 H2O = 6 Fe(II)-[cytochrome c] + nitrite + 8 H(+). It functions in the pathway nitrogen metabolism; nitrate reduction (assimilation). Its function is as follows. Catalyzes the reduction of nitrite to ammonia, consuming six electrons in the process. The sequence is that of Cytochrome c-552 from Escherichia coli O17:K52:H18 (strain UMN026 / ExPEC).